The sequence spans 474 residues: ATP synthase subunit beta (474 aa).

Residue 151–158 coordinates ATP; it reads GGAGVGKT.

Belongs to the ATPase alpha/beta chains family. As to quaternary structure, F-type ATPases have 2 components, CF(1) - the catalytic core - and CF(0) - the membrane proton channel. CF(1) has five subunits: alpha(3), beta(3), gamma(1), delta(1), epsilon(1). CF(0) has three main subunits: a(1), b(2) and c(9-12). The alpha and beta chains form an alternating ring which encloses part of the gamma chain. CF(1) is attached to CF(0) by a central stalk formed by the gamma and epsilon chains, while a peripheral stalk is formed by the delta and b chains.

The protein localises to the cell inner membrane. It carries out the reaction ATP + H2O + 4 H(+)(in) = ADP + phosphate + 5 H(+)(out). In terms of biological role, produces ATP from ADP in the presence of a proton gradient across the membrane. The catalytic sites are hosted primarily by the beta subunits. The protein is ATP synthase subunit beta of Paracoccus denitrificans (strain Pd 1222).